A 161-amino-acid polypeptide reads, in one-letter code: MNFTGYSRFLIVFVALVGALVLPSKAQDSPQDYLRVHNQARGAVGVGPMQWDERVAAYARSYAEQLRGNCRLIHSGGPYGENLAWGSGDLSGVSAVNMWVSEKANYNYAANTCNGVCGHYTQVVWRKSVRLGCAKVRCNNGGTIISCNYDPRGNYVNEKPY.

A signal peptide spans 1–26; it reads MNFTGYSRFLIVFVALVGALVLPSKA. The 116-residue stretch at 34–149 folds into the SCP domain; it reads LRVHNQARGA…NGGTIISCNY (116 aa). Intrachain disulfides connect cysteine 70–cysteine 138, cysteine 113–cysteine 117, and cysteine 133–cysteine 147.

Belongs to the CRISP family.

Its subcellular location is the secreted. The protein resides in the extracellular space. It localises to the apoplast. Its function is as follows. Partially responsible for acquired pathogen resistance. The sequence is that of Pathogenesis-related protein 1 from Arabidopsis thaliana (Mouse-ear cress).